Consider the following 398-residue polypeptide: Nicotinate phosphoribosyltransferase 2 (398 aa).

The residue at position 224 (His-224) is a Phosphohistidine; by autocatalysis.

It belongs to the NAPRTase family. In terms of processing, transiently phosphorylated on a His residue during the reaction cycle. Phosphorylation strongly increases the affinity for substrates and increases the rate of nicotinate D-ribonucleotide production. Dephosphorylation regenerates the low-affinity form of the enzyme, leading to product release.

The catalysed reaction is nicotinate + 5-phospho-alpha-D-ribose 1-diphosphate + ATP + H2O = nicotinate beta-D-ribonucleotide + ADP + phosphate + diphosphate. It functions in the pathway cofactor biosynthesis; NAD(+) biosynthesis; nicotinate D-ribonucleotide from nicotinate: step 1/1. In terms of biological role, catalyzes the synthesis of beta-nicotinate D-ribonucleotide from nicotinate and 5-phospho-D-ribose 1-phosphate at the expense of ATP. The protein is Nicotinate phosphoribosyltransferase 2 of Pseudomonas aeruginosa (strain ATCC 15692 / DSM 22644 / CIP 104116 / JCM 14847 / LMG 12228 / 1C / PRS 101 / PAO1).